Consider the following 82-residue polypeptide: Protein WFDC11 (82 aa).

Positions 1–21 (MKPSWFPCLVFLCMLLLSALG) are cleaved as a signal peptide.

It is found in the secreted. In Mus musculus (Mouse), this protein is Protein WFDC11 (Wfdc11).